The sequence spans 136 residues: Large ribosomal subunit protein uL16c (136 aa).

It belongs to the universal ribosomal protein uL16 family. Part of the 50S ribosomal subunit.

It localises to the plastid. The protein localises to the chloroplast. The chain is Large ribosomal subunit protein uL16c from Buxus microphylla (Littleleaf boxwood).